The primary structure comprises 739 residues: MSLMLEPNPTQIKEERIYAEMGLTDEEFAMVEKILGRLPNYTETGLFSVMWSEHCSYKNSKPVLRKFPTTGERVLQGPGEGAGIVDIGDNQAVVFKMESHNHPSAIEPYQGAATGVGGIIRDVFSMGARPVALLNSLRFGELQSPRVKYLFEEVVAGIAGYGNCIGIPTVGGEVQFDPCYEGNPLVNAMCVGLINHEDIKKGQAHGAGNTVMYVGASTGRDGIHGATFASEELSESSEAKRPAVQVGDPFMEKLLIEACLELIQSDALVGIQDMGAAGLTSSSAEMASKAGMGIEMYLDDVPQRETGMTPYEMMLSESQERMLIVVKKGREQEIVDLFEKYGLAAVTMGKVTEDKMLRLFHKGEKVAEVPADALAEEAPIYHKPSKEAAYFAEFQAMKMETPKVENYKETLFALLQQPTIASKEWVYDQYDYQVRTSTVVTPGSDAAVVRVRGTEKGLAMTTDCNSRYIYLDPEMGGKIAVAEAARNIVCSGGEPLAITDCLNFGNPEKPEIFWQIEKSVDGMSEACRTLQTPVIGGNVSMYNERSGEAVYPTPTVGMVGLVHDLKHVTTQEFKQAGDLVYVIGETKAEFGGSELQKMIHGKIFGQSPSIDLDVELKRQKQVLEAIQAGLVQSAHDVAEGGLAVAISESAIGAKGLGATVKLDGEATAALFAESQSRFVITVKRENKEAFEKAVEAIQVGEVTSTNEVTIHNEENEVLLTANVDEMRKAWKGAIPCLLK.

H54 is an active-site residue. 2 residues coordinate ATP: Y57 and K96. E98 contributes to the Mg(2+) binding site. Residues 99–102 and R121 each bind substrate; that span reads SHNH. The active-site Proton acceptor is the H100. D122 is a Mg(2+) binding site. Q245 is a binding site for substrate. Mg(2+) is bound at residue D273. Position 317–319 (317–319) interacts with substrate; sequence ESQ. The ATP site is built by D500 and G537. N538 contributes to the Mg(2+) binding site. S540 provides a ligand contact to substrate.

It belongs to the FGAMS family. In terms of assembly, monomer. Part of the FGAM synthase complex composed of 1 PurL, 1 PurQ and 2 PurS subunits.

The protein localises to the cytoplasm. It carries out the reaction N(2)-formyl-N(1)-(5-phospho-beta-D-ribosyl)glycinamide + L-glutamine + ATP + H2O = 2-formamido-N(1)-(5-O-phospho-beta-D-ribosyl)acetamidine + L-glutamate + ADP + phosphate + H(+). It functions in the pathway purine metabolism; IMP biosynthesis via de novo pathway; 5-amino-1-(5-phospho-D-ribosyl)imidazole from N(2)-formyl-N(1)-(5-phospho-D-ribosyl)glycinamide: step 1/2. Its function is as follows. Part of the phosphoribosylformylglycinamidine synthase complex involved in the purines biosynthetic pathway. Catalyzes the ATP-dependent conversion of formylglycinamide ribonucleotide (FGAR) and glutamine to yield formylglycinamidine ribonucleotide (FGAM) and glutamate. The FGAM synthase complex is composed of three subunits. PurQ produces an ammonia molecule by converting glutamine to glutamate. PurL transfers the ammonia molecule to FGAR to form FGAM in an ATP-dependent manner. PurS interacts with PurQ and PurL and is thought to assist in the transfer of the ammonia molecule from PurQ to PurL. The chain is Phosphoribosylformylglycinamidine synthase subunit PurL from Bacillus cereus (strain B4264).